Here is a 165-residue protein sequence, read N- to C-terminus: NADPH-dependent 7-cyano-7-deazaguanine reductase (165 aa).

Cys56 acts as the Thioimide intermediate in catalysis. Asp63 acts as the Proton donor in catalysis. Substrate-binding positions include 78 to 80 and 97 to 98; these read VES and HE.

It belongs to the GTP cyclohydrolase I family. QueF type 1 subfamily.

It localises to the cytoplasm. It catalyses the reaction 7-aminomethyl-7-carbaguanine + 2 NADP(+) = 7-cyano-7-deazaguanine + 2 NADPH + 3 H(+). The protein operates within tRNA modification; tRNA-queuosine biosynthesis. Its function is as follows. Catalyzes the NADPH-dependent reduction of 7-cyano-7-deazaguanine (preQ0) to 7-aminomethyl-7-deazaguanine (preQ1). This is NADPH-dependent 7-cyano-7-deazaguanine reductase from Bacillus mycoides (strain KBAB4) (Bacillus weihenstephanensis).